The following is a 205-amino-acid chain: Adenylyl-sulfate kinase (205 aa).

Position 31-38 (31-38 (GLSGAGKS)) interacts with ATP. Residue serine 105 is the Phosphoserine intermediate of the active site.

It belongs to the APS kinase family.

The enzyme catalyses adenosine 5'-phosphosulfate + ATP = 3'-phosphoadenylyl sulfate + ADP + H(+). It participates in sulfur metabolism; hydrogen sulfide biosynthesis; sulfite from sulfate: step 2/3. In terms of biological role, catalyzes the synthesis of activated sulfate. The chain is Adenylyl-sulfate kinase from Shewanella putrefaciens (strain CN-32 / ATCC BAA-453).